A 186-amino-acid chain; its full sequence is Elongation factor P (186 aa).

It belongs to the elongation factor P family.

Its subcellular location is the cytoplasm. It participates in protein biosynthesis; polypeptide chain elongation. In terms of biological role, involved in peptide bond synthesis. Stimulates efficient translation and peptide-bond synthesis on native or reconstituted 70S ribosomes in vitro. Probably functions indirectly by altering the affinity of the ribosome for aminoacyl-tRNA, thus increasing their reactivity as acceptors for peptidyl transferase. In Streptococcus pneumoniae (strain Hungary19A-6), this protein is Elongation factor P.